A 400-amino-acid chain; its full sequence is Nicotinate phosphoribosyltransferase (400 aa).

Residue histidine 220 is modified to Phosphohistidine; by autocatalysis.

This sequence belongs to the NAPRTase family. Transiently phosphorylated on a His residue during the reaction cycle. Phosphorylation strongly increases the affinity for substrates and increases the rate of nicotinate D-ribonucleotide production. Dephosphorylation regenerates the low-affinity form of the enzyme, leading to product release.

The catalysed reaction is nicotinate + 5-phospho-alpha-D-ribose 1-diphosphate + ATP + H2O = nicotinate beta-D-ribonucleotide + ADP + phosphate + diphosphate. Its pathway is cofactor biosynthesis; NAD(+) biosynthesis; nicotinate D-ribonucleotide from nicotinate: step 1/1. Catalyzes the synthesis of beta-nicotinate D-ribonucleotide from nicotinate and 5-phospho-D-ribose 1-phosphate at the expense of ATP. This chain is Nicotinate phosphoribosyltransferase, found in Shigella boydii serotype 18 (strain CDC 3083-94 / BS512).